The following is a 101-amino-acid chain: uncharacterized protein (101 aa).

Positions 1–17 (MKKAAVLAVVLSLGLAG) are cleaved as a signal peptide. Residue Cys18 is the site of N-palmitoyl cysteine attachment. Cys18 carries S-diacylglycerol cysteine lipidation.

The protein resides in the cell membrane. This is an uncharacterized protein from Pasteurella multocida (strain Pm70).